The primary structure comprises 406 residues: Endo-xylogalacturonan hydrolase A (406 aa).

The N-terminal stretch at 1–18 (MALYRNLYLLASLGLSSA) is a signal peptide. 5 PbH1 repeats span residues 183–213 (ATNV…DIGE), 214–257 (STYV…SVGS), 266–289 (VKNI…KTYP), 299–320 (VSNV…QIQS), and 333–375 (PGNA…SISG). Aspartate 228 functions as the Proton donor in the catalytic mechanism. Residue histidine 251 is part of the active site. Asparagine 278 and asparagine 301 each carry an N-linked (GlcNAc...) asparagine glycan.

It belongs to the glycosyl hydrolase 28 family.

Its subcellular location is the secreted. Its function is as follows. Pectinolytic enzyme involved in the degradation of xylogalacturonan (xga), a galacturonan backbone heavily substituted with xylose, and which is one important component of the hairy regions of pectin. Activity requires a galacturonic acid backbone substituted with xylose. This Aspergillus tubingensis protein is Endo-xylogalacturonan hydrolase A (xghA).